The following is a 309-amino-acid chain: Foldase protein PrsA (309 aa).

Residues 1-22 (MKTRSKLAAGFLTLMSVATLAA) form the signal peptide. Cysteine 23 carries the N-palmitoyl cysteine lipid modification. The S-diacylglycerol cysteine moiety is linked to residue cysteine 23. Residues 146 to 241 (TPETSVQVIK…TSYYIIKVTD (96 aa)) form the PpiC domain.

Belongs to the PrsA family.

Its subcellular location is the cell membrane. It carries out the reaction [protein]-peptidylproline (omega=180) = [protein]-peptidylproline (omega=0). In terms of biological role, plays a major role in protein secretion by helping the post-translocational extracellular folding of several secreted proteins. The chain is Foldase protein PrsA from Streptococcus agalactiae serotype V (strain ATCC BAA-611 / 2603 V/R).